The sequence spans 146 residues: Angiogenin (146 aa).

The N-terminal stretch at 1-24 (MVMGLGLFLLVFMLGLGLTLPTLA) is a signal peptide. Residue Gln25 is modified to Pyrrolidone carboxylic acid. Residue His37 is the Proton acceptor of the active site. Arg45 contacts tRNA. Cystine bridges form between Cys50–Cys105, Cys63–Cys116, and Cys81–Cys131. The short motif at 55 to 59 (RRRHL) is the Nucleolar localization signal element. Cys105 and Ile127 together coordinate tRNA. The active-site Proton donor is His138.

The protein belongs to the pancreatic ribonuclease family. As to quaternary structure, homodimer. Interacts with RNH1; inhibiting ANG ribonuclease activity. Interacts with PCNA.

Its subcellular location is the secreted. The protein localises to the nucleus. The protein resides in the nucleolus. It localises to the cytoplasm. It is found in the stress granule. Its activity is regulated as follows. Has weak tRNA ribonuclease activity by itself due to partial autoinhibition by its C-terminus, which folds into a short alpha-helix that partially occludes the substrate-binding site. In absence of stress, the ribonuclease activity is inhibited by RNH1 in the cytoplasm. In response to stress, dissociates from RNH1 in the cytoplasm and associates with cytoplasmic ribosomes with vacant A-sites: ribosomes directly activate the tRNA ribonuclease activity of ANG by refolding the C-terminal alpha-helix. In response to stress, the angiogenic activity of ANG is inhibited by RNH1 in the nucleus. Functionally, secreted ribonuclease that can either promote or restrict cell proliferation of target cells, depending on the context. Endocytosed in target cells via its receptor PLXNB2 and translocates to the cytoplasm or nucleus. Under stress conditions, localizes to the cytoplasm and promotes the assembly of stress granules (SGs): specifically cleaves a subset of tRNAs within anticodon loops to produce tRNA-derived stress-induced fragments (tiRNAs), resulting in translation repression and inhibition of cell proliferation. tiRNas also prevent formation of apoptosome, thereby promoting cell survival. Preferentially cleaves RNAs between a pyrimidine and an adenosine residue, suggesting that it cleaves the anticodon loop of tRNA(Ala) (32-UUAGCAU-38) after positions 33 and 36. Cleaves a subset of tRNAs, including tRNA(Ala), tRNA(Glu), tRNA(Gly), tRNA(Lys), tRNA(Val), tRNA(His), tRNA(Asp) and tRNA(Sec). Under growth conditions and in differentiated cells, translocates to the nucleus and stimulates ribosomal RNA (rRNA) transcription, including that containing the initiation site sequences of 45S rRNA, thereby promoting cell growth and proliferation. Angiogenin induces vascularization of normal and malignant tissues via its ability to promote rRNA transcription. Involved in hematopoietic stem and progenitor cell (HSPC) growth and survival by promoting rRNA transcription in growth conditions and inhibiting translation in response to stress, respectively. Mediates the crosstalk between myeloid and intestinal epithelial cells to protect the intestinal epithelial barrier integrity: secreted by myeloid cells and promotes intestinal epithelial cells proliferation and survival. Also mediates osteoclast-endothelial cell crosstalk in growing bone: produced by osteoclasts and protects the neighboring vascular cells against senescence by promoting rRNA transcription. The protein is Angiogenin (ANG) of Papio hamadryas (Hamadryas baboon).